Here is an 89-residue protein sequence, read N- to C-terminus: Small ribosomal subunit protein uS19 (89 aa).

This sequence belongs to the universal ribosomal protein uS19 family.

Protein S19 forms a complex with S13 that binds strongly to the 16S ribosomal RNA. The protein is Small ribosomal subunit protein uS19 of Xylella fastidiosa (strain M12).